The sequence spans 245 residues: tRNA (guanine-N(1)-)-methyltransferase (245 aa).

S-adenosyl-L-methionine is bound at residue Gly-114.

Belongs to the RNA methyltransferase TrmD family. Homodimer.

The protein localises to the cytoplasm. It carries out the reaction guanosine(37) in tRNA + S-adenosyl-L-methionine = N(1)-methylguanosine(37) in tRNA + S-adenosyl-L-homocysteine + H(+). Functionally, specifically methylates guanosine-37 in various tRNAs. The chain is tRNA (guanine-N(1)-)-methyltransferase from Sphingopyxis alaskensis (strain DSM 13593 / LMG 18877 / RB2256) (Sphingomonas alaskensis).